Here is a 320-residue protein sequence, read N- to C-terminus: Bifunctional protein FolD 2 (320 aa).

NADP(+) is bound by residues G173–S175 and I242.

This sequence belongs to the tetrahydrofolate dehydrogenase/cyclohydrolase family. As to quaternary structure, homodimer.

The catalysed reaction is (6R)-5,10-methylene-5,6,7,8-tetrahydrofolate + NADP(+) = (6R)-5,10-methenyltetrahydrofolate + NADPH. It catalyses the reaction (6R)-5,10-methenyltetrahydrofolate + H2O = (6R)-10-formyltetrahydrofolate + H(+). It participates in one-carbon metabolism; tetrahydrofolate interconversion. Functionally, catalyzes the oxidation of 5,10-methylenetetrahydrofolate to 5,10-methenyltetrahydrofolate and then the hydrolysis of 5,10-methenyltetrahydrofolate to 10-formyltetrahydrofolate. The protein is Bifunctional protein FolD 2 of Rubrobacter xylanophilus (strain DSM 9941 / JCM 11954 / NBRC 16129 / PRD-1).